Here is a 350-residue protein sequence, read N- to C-terminus: D-alanine--D-alanine ligase (350 aa).

An ATP-grasp domain is found at K134–S337. ATP is bound at residue I160–Y212. D289, E301, and N303 together coordinate Mg(2+).

This sequence belongs to the D-alanine--D-alanine ligase family. It depends on Mg(2+) as a cofactor. The cofactor is Mn(2+).

Its subcellular location is the cytoplasm. It carries out the reaction 2 D-alanine + ATP = D-alanyl-D-alanine + ADP + phosphate + H(+). It functions in the pathway cell wall biogenesis; peptidoglycan biosynthesis. In terms of biological role, cell wall formation. The chain is D-alanine--D-alanine ligase from Helicobacter hepaticus (strain ATCC 51449 / 3B1).